A 289-amino-acid chain; its full sequence is Cuticle collagen 19 (289 aa).

The first 18 residues, 1-18 (MGKLIVVGSCGVLVCVLA), serve as a signal peptide directing secretion. The tract at residues 95–289 (SEGCPAGPPG…PCPSRAAYKA (195 aa)) is disordered. 2 triple-helical region regions span residues 101–130 (GPPG…PGVI) and 147–269 (GRPG…KGED). Over residues 162-183 (GPAGGNGRRGPPGPVGGPGEQG) the composition is skewed to gly residues. 2 stretches are compositionally biased toward low complexity: residues 184–207 (PQGD…GEPG) and 223–239 (PRGE…PGND).

Belongs to the cuticular collagen family. As to quaternary structure, collagen polypeptide chains are complexed within the cuticle by disulfide bonds and other types of covalent cross-links.

Functionally, nematode cuticles are composed largely of collagen-like proteins. The cuticle functions both as an exoskeleton and as a barrier to protect the worm from its environment. This is Cuticle collagen 19 (col-19) from Caenorhabditis elegans.